The following is a 364-amino-acid chain: Methylthioribose-1-phosphate isomerase (364 aa).

Substrate contacts are provided by residues 49-51 (RGA), R89, and Q201. D242 functions as the Proton donor in the catalytic mechanism. 252-253 (NK) serves as a coordination point for substrate.

Belongs to the eIF-2B alpha/beta/delta subunits family. MtnA subfamily.

The catalysed reaction is 5-(methylsulfanyl)-alpha-D-ribose 1-phosphate = 5-(methylsulfanyl)-D-ribulose 1-phosphate. It functions in the pathway amino-acid biosynthesis; L-methionine biosynthesis via salvage pathway; L-methionine from S-methyl-5-thio-alpha-D-ribose 1-phosphate: step 1/6. In terms of biological role, catalyzes the interconversion of methylthioribose-1-phosphate (MTR-1-P) into methylthioribulose-1-phosphate (MTRu-1-P). This Leptospira interrogans serogroup Icterohaemorrhagiae serovar Lai (strain 56601) protein is Methylthioribose-1-phosphate isomerase.